The sequence spans 130 residues: Small ribosomal subunit protein uS8 (130 aa).

Belongs to the universal ribosomal protein uS8 family. Part of the 30S ribosomal subunit.

Its function is as follows. One of the primary rRNA binding proteins, it binds directly to 16S rRNA central domain where it helps coordinate assembly of the platform of the 30S subunit. The chain is Small ribosomal subunit protein uS8 from Methanosphaerula palustris (strain ATCC BAA-1556 / DSM 19958 / E1-9c).